The sequence spans 1093 residues: Regulatory protein SWI4 (1093 aa).

The HTH APSES-type domain occupies 37-147 (IEIATYSETD…FQFDPNNPPP (111 aa)). Positions 71-92 (ITQVFKIAQFSKTKRTKILEKE) form a DNA-binding region, H-T-H motif. Positions 138–210 (FQFDPNNPPP…NQPNPSPLQN (73 aa)) are disordered. The span at 152–172 (NSILRKTSPGTKITSPSSYNK) shows a compositional bias: polar residues. The segment covering 179–201 (SSSSTSATTTAANKKGKKNASIN) has biased composition (low complexity). At S255 the chain carries Phosphoserine. Positions 448 to 457 (NSMNMSSRSM) are enriched in low complexity. Positions 448–468 (NSMNMSSRSMTPFSAGNTSSQ) are disordered. Residues 458 to 468 (TPFSAGNTSSQ) are compositionally biased toward polar residues. ANK repeat units lie at residues 520–549 (QGHT…NALQ) and 641–670 (IGNT…STDI). Phosphoserine is present on S806. Disordered stretches follow at residues 813 to 855 (RSQS…SSLL) and 973 to 1017 (QDEE…DAKF). Over residues 818-837 (SDEKEKAKDNENQVEKKKDP) the composition is skewed to basic and acidic residues. Positions 846–855 (PSLESPSSLL) are enriched in low complexity. Residues 1000–1010 (KSTSETSSPKN) show a composition bias toward polar residues.

As to quaternary structure, component of the transcription complex SCB-binding factor (SBF) composed of SWI6 and SWI4. Interacts with MSA2.

Part of a complex involved in cell-cycle-dependent transcription. SWI4 and SWI6 are required for formation of the cell-cycle box factor-DNA complex. The repeated element in the upstream region of HO (5'-CACGAAAA-3') is called the cell cycle box (CCB). In Saccharomyces cerevisiae (strain ATCC 204508 / S288c) (Baker's yeast), this protein is Regulatory protein SWI4 (SWI4).